A 75-amino-acid chain; its full sequence is Defense protein 6 (75 aa).

Positions 1 to 20 are cleaved as a signal peptide; it reads MKTCLVFAFFLVAVFAAVQA. The propeptide occupies 21–32; the sequence is EENDSPQTLPRR. 3 cysteine pairs are disulfide-bonded: Cys-44/Cys-63, Cys-49/Cys-68, and Cys-53/Cys-70.

It belongs to the invertebrate defensin family.

It localises to the secreted. In terms of biological role, has antibacterial activity. This is Defense protein 6 from Lonomia obliqua (Moth).